We begin with the raw amino-acid sequence, 622 residues long: Chaperone protein HtpG (622 aa).

Residues 1-322 (MTEAKNYEFQ…SEDLPLNISR (322 aa)) form an a; substrate-binding region. A b region spans residues 323 to 539 (QSLQDNALVS…DGFMSASMER (217 aa)). The segment at 540-622 (VLAASRKEQG…KILDRAVSRA (83 aa)) is c.

This sequence belongs to the heat shock protein 90 family. In terms of assembly, homodimer.

The protein resides in the cytoplasm. Functionally, molecular chaperone. Has ATPase activity. The protein is Chaperone protein HtpG of Desulfotalea psychrophila (strain LSv54 / DSM 12343).